The following is a 274-amino-acid chain: MTAILPSTAATVNTGFLHFDCVGKTFPTPRGPYVAIEDVNLSVQQGEFICVIGHSGCGKSTLLNLVSGFSQPTSGGVYLDGQPIQEPGPDRMVVFQNYSLLPWKSARDNIALAVKAARPHLSTSEQRQVVDHHLELVGLTEAQHKRPDQLSGGMKQRVAIARALSIRPEVLILDEPFGALDAITKEELQEELLNIWEEARPTVLMITHDIDEALFLADRVVMMTNGPAATIGEVLEIPFDRPREREAVVEDPRYAQLRTEALDFLYRRFAHDDD.

In terms of domain architecture, ABC transporter spans 17-250 (LHFDCVGKTF…RPREREAVVE (234 aa)). 53-60 (GHSGCGKS) is a binding site for ATP.

This sequence belongs to the ABC transporter superfamily. Nitrate/nitrite/cyanate uptake transporter (NitT) (TC 3.A.1.16) family. As to quaternary structure, the complex is composed of two ATP-binding proteins (NrtC and NrtD), two transmembrane proteins (NrtB) and a solute-binding protein (NrtA).

The protein localises to the cell inner membrane. The catalysed reaction is nitrate(out) + ATP + H2O = nitrate(in) + ADP + phosphate + H(+). Its function is as follows. Part of the ABC transporter complex NrtABCD involved in nitrate uptake. The complex is probably also involved in nitrite transport. Probably responsible for energy coupling to the transport system. This Synechococcus elongatus (strain ATCC 33912 / PCC 7942 / FACHB-805) (Anacystis nidulans R2) protein is Nitrate import ATP-binding protein NrtD.